Here is a 232-residue protein sequence, read N- to C-terminus: 2-C-methyl-D-erythritol 4-phosphate cytidylyltransferase (232 aa).

The protein belongs to the IspD/TarI cytidylyltransferase family. IspD subfamily.

The enzyme catalyses 2-C-methyl-D-erythritol 4-phosphate + CTP + H(+) = 4-CDP-2-C-methyl-D-erythritol + diphosphate. It functions in the pathway isoprenoid biosynthesis; isopentenyl diphosphate biosynthesis via DXP pathway; isopentenyl diphosphate from 1-deoxy-D-xylulose 5-phosphate: step 2/6. In terms of biological role, catalyzes the formation of 4-diphosphocytidyl-2-C-methyl-D-erythritol from CTP and 2-C-methyl-D-erythritol 4-phosphate (MEP). The protein is 2-C-methyl-D-erythritol 4-phosphate cytidylyltransferase of Bacillus velezensis (strain DSM 23117 / BGSC 10A6 / LMG 26770 / FZB42) (Bacillus amyloliquefaciens subsp. plantarum).